The following is a 556-amino-acid chain: RING finger protein 207 (556 aa).

Residues 25 to 64 (CPLCHAQYERPCLLDCFHEFCAGCLRGRAADGRLACPLCQ) form an RING-type zinc finger. A B box-type; atypical zinc finger spans residues 93–145 (TEVVRCANCDLECGKQDAETTYFCNTCGQPLCARCRDETHRARMFARHDIVAL). Residues cysteine 98, cysteine 101, cysteine 127, and histidine 132 each coordinate Zn(2+). Coiled-coil stretches lie at residues 218-273 (TREA…NKAE) and 385-425 (FTEH…SLIK). The segment at 517–556 (FQVPVDEPSDHPQNTHDDGVNAEAPARVSTLKPAMEKEVS) is disordered. Basic and acidic residues predominate over residues 524-535 (PSDHPQNTHDDG).

Interacts with the core-glycosylated, but not the fully glycosylated form of KCNH2/HERG. Interacts with DNAJA1 and HSPA8. Interacts (via the C-terminus) with HSPA1A; this interaction additively increases KCNH2 expression.

Its subcellular location is the cytoplasm. Functionally, plays a role in cardiac repolarization possibly by stabilizing membrane expression of the potassium channel KCNH2/HERG, or by assisting its synthesis, folding or export from the endoplasmic reticulum, in a heat shock protein-dependent manner. In Bos taurus (Bovine), this protein is RING finger protein 207 (RNF207).